Consider the following 347-residue polypeptide: 4-hydroxy-2-oxovalerate aldolase 1 (347 aa).

One can recognise a Pyruvate carboxyltransferase domain in the interval 8–261; that stretch reads VTLYDMSLLX…ETGIDLYKIM (254 aa). H20 acts as the Proton acceptor in catalysis. Substrate contacts are provided by S171 and H200. H200 and H202 together coordinate Mn(2+). Residue Y291 coordinates substrate.

It belongs to the 4-hydroxy-2-oxovalerate aldolase family.

The enzyme catalyses (S)-4-hydroxy-2-oxopentanoate = acetaldehyde + pyruvate. The sequence is that of 4-hydroxy-2-oxovalerate aldolase 1 (salH) from Metapseudomonas furukawaii (Pseudomonas furukawaii).